Consider the following 76-residue polypeptide: Sec-independent protein translocase protein TatA (76 aa).

Residues 1–21 (MGSFSIWHWLIVLLIVVLVFG) form a helical membrane-spanning segment. Residues 44-76 (RDGSTAPADPAQQVTANKSADANTVDVEAKQKS) form a disordered region. Polar residues predominate over residues 55–65 (QQVTANKSADA).

The protein belongs to the TatA/E family. The Tat system comprises two distinct complexes: a TatABC complex, containing multiple copies of TatA, TatB and TatC subunits, and a separate TatA complex, containing only TatA subunits. Substrates initially bind to the TatABC complex, which probably triggers association of the separate TatA complex to form the active translocon.

It localises to the cell inner membrane. In terms of biological role, part of the twin-arginine translocation (Tat) system that transports large folded proteins containing a characteristic twin-arginine motif in their signal peptide across membranes. TatA could form the protein-conducting channel of the Tat system. This is Sec-independent protein translocase protein TatA from Methylibium petroleiphilum (strain ATCC BAA-1232 / LMG 22953 / PM1).